A 378-amino-acid chain; its full sequence is Dual-specificity RNA methyltransferase RlmN (378 aa).

Glutamate 97 acts as the Proton acceptor in catalysis. Residues 103–341 (EGDRATLCVS…VMVRKTRGDD (239 aa)) form the Radical SAM core domain. Cysteine 110 and cysteine 346 form a disulfide bridge. [4Fe-4S] cluster contacts are provided by cysteine 117, cysteine 121, and cysteine 124. Residues 171–172 (GE), serine 203, 225–227 (SLH), and asparagine 303 each bind S-adenosyl-L-methionine. The active-site S-methylcysteine intermediate is cysteine 346.

It belongs to the radical SAM superfamily. RlmN family. [4Fe-4S] cluster is required as a cofactor.

It localises to the cytoplasm. The enzyme catalyses adenosine(2503) in 23S rRNA + 2 reduced [2Fe-2S]-[ferredoxin] + 2 S-adenosyl-L-methionine = 2-methyladenosine(2503) in 23S rRNA + 5'-deoxyadenosine + L-methionine + 2 oxidized [2Fe-2S]-[ferredoxin] + S-adenosyl-L-homocysteine. It catalyses the reaction adenosine(37) in tRNA + 2 reduced [2Fe-2S]-[ferredoxin] + 2 S-adenosyl-L-methionine = 2-methyladenosine(37) in tRNA + 5'-deoxyadenosine + L-methionine + 2 oxidized [2Fe-2S]-[ferredoxin] + S-adenosyl-L-homocysteine. Functionally, specifically methylates position 2 of adenine 2503 in 23S rRNA and position 2 of adenine 37 in tRNAs. m2A2503 modification seems to play a crucial role in the proofreading step occurring at the peptidyl transferase center and thus would serve to optimize ribosomal fidelity. This is Dual-specificity RNA methyltransferase RlmN from Idiomarina loihiensis (strain ATCC BAA-735 / DSM 15497 / L2-TR).